The sequence spans 426 residues: Serine/threonine-protein kinase ssn3 (426 aa).

In terms of domain architecture, Protein kinase spans 41–368 (YHIVGFISSG…AREALEHPYF (328 aa)). Residues 47 to 55 (ISSGTYGRV) and Lys-71 contribute to the ATP site. Asp-173 acts as the Proton acceptor in catalysis. The disordered stretch occupies residues 390 to 426 (RVTQDDNDIRSGSLPGTKRSGLPDDSLMGRAAKRLKE).

Belongs to the protein kinase superfamily. CMGC Ser/Thr protein kinase family. CDC2/CDKX subfamily. In terms of assembly, component of the srb8-11 complex, a regulatory module of the Mediator complex. The cofactor is Mg(2+).

The protein localises to the nucleus. The catalysed reaction is L-seryl-[protein] + ATP = O-phospho-L-seryl-[protein] + ADP + H(+). It catalyses the reaction L-threonyl-[protein] + ATP = O-phospho-L-threonyl-[protein] + ADP + H(+). It carries out the reaction [DNA-directed RNA polymerase] + ATP = phospho-[DNA-directed RNA polymerase] + ADP + H(+). Its function is as follows. Component of the srb8-11 complex. The srb8-11 complex is a regulatory module of the Mediator complex which is itself involved in regulation of basal and activated RNA polymerase II-dependent transcription. The srb8-11 complex may be involved in the transcriptional repression of a subset of genes regulated by Mediator. It may inhibit the association of the Mediator complex with RNA polymerase II to form the holoenzyme complex. The srb8-11 complex phosphorylates the C-terminal domain (CTD) of the largest subunit of RNA polymerase II. In Aspergillus fumigatus (strain ATCC MYA-4609 / CBS 101355 / FGSC A1100 / Af293) (Neosartorya fumigata), this protein is Serine/threonine-protein kinase ssn3 (ssn3).